Reading from the N-terminus, the 246-residue chain is MTHSNRMLLGVNIDHVATLRQARGTRYPDPVKAALDAEEAGADGITVHLREDRRHIQERDVVVLKDVLQTRMNFEMGVTEEMMAFAEKIRPAHICLVPETRQELTTEGGLDVAGQEARIKAAVERLARTGAEVSLFIDADERQIEASRRVGAPAIELHTGRYADAQTPTEVAEELKRIVDGVAFGVGQGLIVNAGHGLHYHNVEAVAAIKGINELNIGHALVAHALFVGFKAAVAEMKALIVAASR.

Asn-12 contacts 3-amino-2-oxopropyl phosphate. Position 14 to 15 (14 to 15) interacts with 1-deoxy-D-xylulose 5-phosphate; that stretch reads DH. Arg-23 contacts 3-amino-2-oxopropyl phosphate. The active-site Proton acceptor is His-48. Residues Arg-50 and His-55 each contribute to the 1-deoxy-D-xylulose 5-phosphate site. The active-site Proton acceptor is the Glu-75. A 1-deoxy-D-xylulose 5-phosphate-binding site is contributed by Thr-105. His-196 acts as the Proton donor in catalysis. Residues Gly-197 and 218 to 219 each bind 3-amino-2-oxopropyl phosphate; that span reads GH.

It belongs to the PNP synthase family. As to quaternary structure, homooctamer; tetramer of dimers.

The protein localises to the cytoplasm. The enzyme catalyses 3-amino-2-oxopropyl phosphate + 1-deoxy-D-xylulose 5-phosphate = pyridoxine 5'-phosphate + phosphate + 2 H2O + H(+). Its pathway is cofactor biosynthesis; pyridoxine 5'-phosphate biosynthesis; pyridoxine 5'-phosphate from D-erythrose 4-phosphate: step 5/5. Catalyzes the complicated ring closure reaction between the two acyclic compounds 1-deoxy-D-xylulose-5-phosphate (DXP) and 3-amino-2-oxopropyl phosphate (1-amino-acetone-3-phosphate or AAP) to form pyridoxine 5'-phosphate (PNP) and inorganic phosphate. The chain is Pyridoxine 5'-phosphate synthase from Pseudomonas putida (strain GB-1).